A 216-amino-acid chain; its full sequence is RNA pyrophosphohydrolase (216 aa).

A Nudix hydrolase domain is found at 6–149; the sequence is GFRPNVGIIL…KRDVYQLALT (144 aa). The short motif at 38–59 is the Nudix box element; it reads GGIKYGETPMQAMYRELHEETG. The disordered stretch occupies residues 159 to 188; sequence AQRTDKSRGPRAPRYPRVANGHAASEAPAA.

It belongs to the Nudix hydrolase family. RppH subfamily. The cofactor is a divalent metal cation.

Accelerates the degradation of transcripts by removing pyrophosphate from the 5'-end of triphosphorylated RNA, leading to a more labile monophosphorylated state that can stimulate subsequent ribonuclease cleavage. The protein is RNA pyrophosphohydrolase of Burkholderia mallei (strain NCTC 10247).